Consider the following 472-residue polypeptide: Argininosuccinate lyase (472 aa).

This sequence belongs to the lyase 1 family. Argininosuccinate lyase subfamily.

Its subcellular location is the cytoplasm. The catalysed reaction is 2-(N(omega)-L-arginino)succinate = fumarate + L-arginine. Its pathway is amino-acid biosynthesis; L-arginine biosynthesis; L-arginine from L-ornithine and carbamoyl phosphate: step 3/3. This is Argininosuccinate lyase from Polynucleobacter necessarius subsp. necessarius (strain STIR1).